The chain runs to 763 residues: Eukaryotic translation initiation factor 3 subunit B (763 aa).

A sufficient for interaction with HCR1 and TIF32 region spans residues 1–136; that stretch reads MKNFLPRTLK…LFVECGSMND (136 aa). The segment at 28–261 is sufficient for interaction with PIC8; the sequence is RNTQLKRSKI…GVTAWGGPNF (234 aa). The residue at position 61 (serine 61) is a Phosphoserine. Position 67 is a phosphotyrosine (tyrosine 67). Positions 77 to 162 constitute an RRM domain; sequence QYIVVNGAPV…HRLFLYTMKD (86 aa). WD repeat units lie at residues 228 to 266, 277 to 325, 373 to 416, 484 to 524, 544 to 589, and 605 to 650; these read RENWSTNYVRFSPKGTYLFSYHQQGVTAWGGPNFDRLRR, VSPN…LMAT, LKPS…SACT, ELKD…IRFY, IPKT…EKNI, and PTYS…VKED. Serine 669 is subject to Phosphoserine.

Belongs to the eIF-3 subunit B family. The eukaryotic translation initiation factor 3 (eIF-3) core complex is composed of TIF32, PRT1, NIP1, TIF34 and TIF35. A subcomplex of TIF32, NIP1 and PRT1 mediates the interaction with eIF-1, TIF5/eIF-5 and HCR1. The factors eIF-1, eIF-2, eIF-3, TIF5/eIF-5 and methionyl-tRNAi form a multifactor complex (MFC) that may bind to the 40S ribosome.

The protein resides in the cytoplasm. In terms of biological role, RNA-binding component of the eukaryotic translation initiation factor 3 (eIF-3) complex, which is involved in protein synthesis of a specialized repertoire of mRNAs and, together with other initiation factors, stimulates binding of mRNA and methionyl-tRNAi to the 40S ribosome. The eIF-3 complex specifically targets and initiates translation of a subset of mRNAs involved in cell proliferation. This is Eukaryotic translation initiation factor 3 subunit B from Saccharomyces cerevisiae (strain ATCC 204508 / S288c) (Baker's yeast).